The chain runs to 339 residues: ATPase GET3 (339 aa).

34–41 (KGGVGKTT) contributes to the ATP binding site. Aspartate 63 is a catalytic residue. ATP contacts are provided by glutamate 243 and asparagine 270. Zn(2+) is bound by residues cysteine 281 and cysteine 284.

The protein belongs to the arsA ATPase family. In terms of assembly, homodimer.

It localises to the cytoplasm. It is found in the endoplasmic reticulum. ATPase required for the post-translational delivery of tail-anchored (TA) proteins to the endoplasmic reticulum. Recognizes and selectively binds the transmembrane domain of TA proteins in the cytosol. This complex then targets to the endoplasmic reticulum by membrane-bound receptors, where the tail-anchored protein is released for insertion. This process is regulated by ATP binding and hydrolysis. ATP binding drives the homodimer towards the closed dimer state, facilitating recognition of newly synthesized TA membrane proteins. ATP hydrolysis is required for insertion. Subsequently, the homodimer reverts towards the open dimer state, lowering its affinity for the membrane-bound receptor, and returning it to the cytosol to initiate a new round of targeting. The chain is ATPase GET3 from Coccidioides immitis (strain RS) (Valley fever fungus).